A 435-amino-acid chain; its full sequence is Flavonol 7-O-rhamnosyltransferase (435 aa).

Glutamine 18 contributes to the UDP binding site. Glutamine 18 lines the UDP-beta-L-rhamnose pocket. The Proton acceptor role is filled by histidine 21. Residue histidine 21 coordinates quercetin. Residue aspartate 119 is the Charge relay of the active site. Residues serine 250, alanine 315, histidine 332, glycine 336, serine 337, and glutamate 340 each coordinate UDP. Serine 250, alanine 315, histidine 332, glycine 336, serine 337, and glutamate 340 together coordinate UDP-beta-L-rhamnose.

The protein belongs to the UDP-glycosyltransferase family. Highly expressed in floral buds. Expressed in stems, leaves and flowers. Expressed at low levels in roots and siliques. Expressed on the adaxial side of cotyledons and emerging leaves, in trichomes, root columella cells, and the late elongation/early differentiation zone of roots.

The enzyme catalyses quercitrin + UDP-beta-L-rhamnose = quercetin 3,7-bis-O-alpha-L-rhamnoside + UDP + H(+). The catalysed reaction is quercetin 3-O-beta-D-glucoside + UDP-beta-L-rhamnose = quercetin 3-O-beta-D-glucoside-7-O-alpha-L-rhamnoside + UDP + H(+). Its pathway is flavonoid metabolism. Its function is as follows. Flavonol 7-O-rhamnosyltransferase that catalyzes the transfer of rhamnose from UDP-rhamnose to the 7-OH position of 3-O-glycosylated flavonols, such as kaempferol 3-O-rhamnoside, kaempferol 3-O-glucoside, quercetin 3-O-glucoside, quercetin 3-O-galactoside, quercetin 3-O-rhamnoside and isorhamnetin 3-O-glucoside. Is able to glycosylate the flavonols quercetin and kaempferol to yield quercetin 7-O-rhamnoside and kaempferol 7-O-rhamnoside. Shows a strict specificity for UDP-rhamnose as sugar donor. Does not act on 3-O-glycosylated anthocyanins. The accumulation of kaempferol 3-O-rhamnoside-7-O-rhamnoside inhibits basipetal auxin transport, which influences auxin distribution and plant organ development. This Arabidopsis thaliana (Mouse-ear cress) protein is Flavonol 7-O-rhamnosyltransferase.